A 333-amino-acid polypeptide reads, in one-letter code: Casein kinase II subunit beta-1 (333 aa).

The segment covering 58–78 has biased composition (acidic residues); it reads VEPEDDDDEEEEDEEDEEDMS. 2 disordered regions span residues 58–92 and 282–333; these read VEPE…ERRH and ARRY…ESEL. Residues 305-316 are compositionally biased toward basic residues; sequence ASRRRGPPRRQK.

Belongs to the casein kinase 2 subunit beta family. Tetramer composed of two alpha chains, one beta chain and one beta' chain. Post-translationally, phosphorylated by alpha subunit.

Functionally, regulatory subunit of casein kinase II/CK2. As part of the kinase complex regulates the basal catalytic activity of the alpha subunit a constitutively active serine/threonine-protein kinase that phosphorylates a large number of substrates containing acidic residues C-terminal to the phosphorylated serine or threonine. The polypeptide is Casein kinase II subunit beta-1 (ckb-1) (Neurospora crassa (strain ATCC 24698 / 74-OR23-1A / CBS 708.71 / DSM 1257 / FGSC 987)).